Reading from the N-terminus, the 554-residue chain is 2-succinyl-5-enolpyruvyl-6-hydroxy-3-cyclohexene-1-carboxylate synthase (554 aa).

This sequence belongs to the TPP enzyme family. MenD subfamily. In terms of assembly, homodimer. It depends on Mg(2+) as a cofactor. Mn(2+) is required as a cofactor. Thiamine diphosphate serves as cofactor.

The enzyme catalyses isochorismate + 2-oxoglutarate + H(+) = 5-enolpyruvoyl-6-hydroxy-2-succinyl-cyclohex-3-ene-1-carboxylate + CO2. It functions in the pathway quinol/quinone metabolism; 1,4-dihydroxy-2-naphthoate biosynthesis; 1,4-dihydroxy-2-naphthoate from chorismate: step 2/7. Its pathway is quinol/quinone metabolism; menaquinone biosynthesis. Its function is as follows. Catalyzes the thiamine diphosphate-dependent decarboxylation of 2-oxoglutarate and the subsequent addition of the resulting succinic semialdehyde-thiamine pyrophosphate anion to isochorismate to yield 2-succinyl-5-enolpyruvyl-6-hydroxy-3-cyclohexene-1-carboxylate (SEPHCHC). The chain is 2-succinyl-5-enolpyruvyl-6-hydroxy-3-cyclohexene-1-carboxylate synthase from Renibacterium salmoninarum (strain ATCC 33209 / DSM 20767 / JCM 11484 / NBRC 15589 / NCIMB 2235).